A 388-amino-acid polypeptide reads, in one-letter code: Ectopic P granules protein 6 (388 aa).

Residues 1–25 (MSKKEETIFFRIEKENRPESSKKEE) are compositionally biased toward basic and acidic residues. Residues 1–33 (MSKKEETIFFRIEKENRPESSKKEEDENSTEEM) form a disordered region. A WD 1 repeat occupies 217–257 (AHLTDIAQVALNCQGTLVATGSTKGTVIRVFDARTKGPLYE). The LRRG motif motif lies at 258–261 (LRRG). One copy of the WD 2 repeat lies at 262-301 (TVQAHLQCMAFSPCSSYLAVASDKGTLHMFGIRDAEPQKK). The interval 265–328 (AHLQCMAFSP…LDRPVMAIGF (64 aa)) is required for atg-2 binding.

It belongs to the WD repeat PROPPIN family. As to quaternary structure, interacts with atg-2; the interaction is direct. In terms of tissue distribution, widely expressed in tissues including pharyngeal, muscle and neuronal tissues.

It localises to the cytoplasm. It is found in the preautophagosomal structure membrane. Its function is as follows. Component of the epg-6/atg-2 complex, which is involved in the generation of autophagosomes from omegasomes and in the distribution of atg-9 and atg-13 during the autophagy-mediated degradation of protein aggregates. Binds to phosphatidylinositols on preautophagosomes, which are early autophagic structures, to promote autophagosome formation. In particular, binds with high affinity to phosphatidylinositols including phosphatidylinositol 3-phosphate (PtdIns(3)P) and phosphatidylinositol 5-phosphate (PtdIns(5)P), but more weakly to phosphatidylinositol 4-phosphate (PtdIns(4)P) and phosphatidylinositol 3,5-bisphosphate (PtdIns(3,5)P2). Involved in autophagy-mediated degradation of ribosomal RNA and ribosomal proteins in lysosomes, which is essential for maintaining nucleotide homeostasis. The chain is Ectopic P granules protein 6 from Caenorhabditis elegans.